A 356-amino-acid polypeptide reads, in one-letter code: Protein HEXIM1 (356 aa).

Composition is skewed to basic and acidic residues over residues 1–11 (MAEPLLTEHQH) and 24–47 (VHEE…DSRW). The interval 1–162 (MAEPLLTEHQ…RPSKKKRHWK (162 aa)) is disordered. Over residues 48-58 (QSRASLQSGSR) the composition is skewed to polar residues. Positions 84–93 (SLEKGEKGQN) are enriched in basic and acidic residues. Ser-98 and Ser-103 each carry phosphoserine. Basic residues predominate over residues 145–162 (LGKKKHRRRPSKKKRHWK). The basic region; mediates nuclear localization and interaction with 7SK snRNA and NR3C1 stretch occupies residues 147–174 (KKKHRRRPSKKKRHWKPYYKLTWEEKKK). Residues 199–202 (PYNT) form an interaction with P-TEFb region. Positions 207-247 (MDDHDQEEPDLKTGLYPKRAAAKSDDTSDEDFVEEAGEEDG) are autoinhibitory acidic region; in absence of 7SK snRNA interacts with the basic region preventing interaction with P-TEFb and modulating subcellular localization. A disordered region spans residues 210-259 (HDQEEPDLKTGLYPKRAAAKSDDTSDEDFVEEAGEEDGGSDGMGGDGSEF). Ser-230 carries the post-translational modification Phosphoserine. Thr-233 is modified (phosphothreonine). The segment covering 233–248 (TSDEDFVEEAGEEDGG) has biased composition (acidic residues). Ser-234, Ser-249, and Ser-257 each carry phosphoserine. Residues 280-346 (SKQELIKEYL…LTENELHRQQ (67 aa)) are a coiled coil. Residues 283–311 (ELIKEYLELEKCLSRKEDENNRLRLESKR) form a mediates interaction with CCNT1 region. The required for inhibition of ESR1-dependent transcription stretch occupies residues 307–352 (LESKRLGGVDARVRELELELDRLRAENLQLLTENELHRQQERAPLS).

Belongs to the HEXIM family. Homooligomer and heterooligomer with HEXIM2; probably dimeric. Core component of the 7SK RNP complex, at least composed of 7SK RNA, LARP7, MEPCE, HEXIM1 (or HEXIM2) and P-TEFb (composed of CDK9 and CCNT1/cyclin-T1). Interacts with the N-CoR complex through NCOR1. Interacts with ESR1 and NR3C1. May interact with NF-kappa-B through RELA. Interacts with CCNT2; mediates formation of a tripartite complex with KPNA2. Part of the HDP-RNP complex composed of at least HEXIM1, PRKDC, XRCC5, XRCC6, paraspeckle proteins (SFPQ, NONO, PSPC1, RBM14, and MATR3) and NEAT1 non-coding RNA. In terms of tissue distribution, widely expressed with higher expression in heart, skeletal muscle and brain (at protein level).

Its subcellular location is the nucleus. It is found in the cytoplasm. In terms of biological role, transcriptional regulator which functions as a general RNA polymerase II transcription inhibitor. Core component of the 7SK RNP complex: in cooperation with 7SK snRNA sequesters P-TEFb in a large inactive 7SK snRNP complex preventing RNA polymerase II phosphorylation and subsequent transcriptional elongation. May also regulate NF-kappa-B, ESR1, NR3C1 and CIITA-dependent transcriptional activity. Plays a role in the regulation of DNA virus-mediated innate immune response by assembling into the HDP-RNP complex, a complex that serves as a platform for IRF3 phosphorylation and subsequent innate immune response activation through the cGAS-STING pathway. The protein is Protein HEXIM1 (Hexim1) of Mus musculus (Mouse).